We begin with the raw amino-acid sequence, 309 residues long: Glycine--tRNA ligase alpha subunit (309 aa).

It belongs to the class-II aminoacyl-tRNA synthetase family. As to quaternary structure, tetramer of two alpha and two beta subunits.

Its subcellular location is the cytoplasm. The enzyme catalyses tRNA(Gly) + glycine + ATP = glycyl-tRNA(Gly) + AMP + diphosphate. This is Glycine--tRNA ligase alpha subunit from Anaeromyxobacter sp. (strain K).